Here is a 72-residue protein sequence, read N- to C-terminus: U10-myrmicitoxin-Tb1a (72 aa).

A signal peptide spans 1–26; that stretch reads MRVSYLSLTLTIVVVIAIIYAPETEA. A propeptide spanning residues 27–36 is cleaved from the precursor; the sequence is KAWADADAEA.

It belongs to the formicidae venom precursor-01 superfamily. In terms of tissue distribution, expressed by the venom gland.

It localises to the secreted. In terms of biological role, in vivo, this neurotoxin paralyzes about 40% of blowflies (L.caesar) one hour after intrathoracic injection, when tested at high doses (28 nmol/g). The polypeptide is U10-myrmicitoxin-Tb1a (Tetramorium bicarinatum (Tramp ant)).